The sequence spans 342 residues: L-threonine 3-dehydrogenase (342 aa).

C38 contributes to the Zn(2+) binding site. Active-site charge relay system residues include T40 and H43. Zn(2+) is bound by residues H63, E64, C93, C96, C99, and C107. NAD(+)-binding positions include I175, D195, R200, 262-264, and 286-287; these read LGI and IY.

Belongs to the zinc-containing alcohol dehydrogenase family. In terms of assembly, homotetramer. The cofactor is Zn(2+).

It localises to the cytoplasm. It catalyses the reaction L-threonine + NAD(+) = (2S)-2-amino-3-oxobutanoate + NADH + H(+). Its pathway is amino-acid degradation; L-threonine degradation via oxydo-reductase pathway; glycine from L-threonine: step 1/2. In terms of biological role, catalyzes the NAD(+)-dependent oxidation of L-threonine to 2-amino-3-ketobutyrate. This is L-threonine 3-dehydrogenase from Burkholderia lata (strain ATCC 17760 / DSM 23089 / LMG 22485 / NCIMB 9086 / R18194 / 383).